We begin with the raw amino-acid sequence, 590 residues long: L-gulonolactone oxidase 5 (590 aa).

The N-terminal stretch at 1-31 is a signal peptide; sequence MAFGYSPSYCSFWRTLLGLYCLFTLVHTVIS. An FAD-binding PCMH-type domain is found at 60–242; it reads STCRAANVAY…SQVTFELQPM (183 aa).

The protein belongs to the oxygen-dependent FAD-linked oxidoreductase family. It depends on FAD as a cofactor.

The enzyme catalyses L-gulono-1,4-lactone + O2 = L-ascorbate + H2O2 + H(+). It participates in cofactor biosynthesis; L-ascorbate biosynthesis. Its function is as follows. Catalyzes the oxidation of L-gulono-1,4-lactone to ascorbic acid. L-gulono-1,4-lactone is oxidized to hydrogen peroxide and L-xylo-hexulonolactone which spontaneously isomerizes to L-ascorbate. This Arabidopsis thaliana (Mouse-ear cress) protein is L-gulonolactone oxidase 5.